Consider the following 438-residue polypeptide: Phosphoribosylamine--glycine ligase (438 aa).

Positions 108 to 316 constitute an ATP-grasp domain; sequence RTFMERNEIP…LLEVAEGIVD (209 aa). Residue 135–194 participates in ATP binding; the sequence is VDDFGRPVVVKPIGLTGGKGVKVVGYQLRDNEEAKSYAEELIRRDGRVLIEERTNGVEFT. The Mg(2+) site is built by Gln-274, Glu-286, and Asn-288. Residues Gln-274, Glu-286, and Asn-288 each contribute to the Mn(2+) site.

Belongs to the GARS family. The cofactor is Mg(2+). Mn(2+) is required as a cofactor.

It catalyses the reaction 5-phospho-beta-D-ribosylamine + glycine + ATP = N(1)-(5-phospho-beta-D-ribosyl)glycinamide + ADP + phosphate + H(+). The protein operates within purine metabolism; IMP biosynthesis via de novo pathway; N(1)-(5-phospho-D-ribosyl)glycinamide from 5-phospho-alpha-D-ribose 1-diphosphate: step 2/2. The protein is Phosphoribosylamine--glycine ligase of Thermococcus gammatolerans (strain DSM 15229 / JCM 11827 / EJ3).